We begin with the raw amino-acid sequence, 639 residues long: MKIINIGVLAHVDAGKTTLTESLLYNSGAITELGSVDKGTTRTDNTLLERQRGITIQTGITSFQWENTKVNIIDTPGHMDFLAEVYRSLSVLDGAILLISAKDGVQAQTRILFHALRKMGIPTIFFINKIDQNGIDLSTVYQDIKEKLSAEIVIKQKVELYPNMCVTNFTESEQWDTVIEGNDDLLEKYMSGKSLEALELEQEESIRFHNCSLFPVYHGSAKNNIGIDNLIEVITNKFYSSTHRGQSELCGKVFKIEYSEKRQRLAYIRLYSGVLHLRDSVRISEKEKIKITEMYTSINGELCKIDKAYSGEIVILQNEFLKLNSVLGDTKLLPQRERIENPLPLLQTTVEPSKPQQREMLLDALLEISDSDPLLRYYVDSATHEIILSFLGKVQMEVTCALLQEKYHVEIEIKEPTVIYMERPLKKAEYTIHIEVPPNPFWASIGLSVSPLPLGSGMQYESSVSLGYLNQSFQNAVMEGIRYGCEQGLYGWNVTDCKICFKYGLYYSPVSTPADFRMLAPIVLEQVLKKAGTELLEPYLSFKIYAPQEYLSRAYTDAPKYCANIVDTQLKNNEVILSGEIPARCIQEYRSDLTFFTNGRSVCLTELKGYHVTTGEPVCQPRRPNSRIDKVRYMFNKIT.

The tr-type G domain occupies 1-242 (MKIINIGVLA…VITNKFYSST (242 aa)). GTP is bound by residues 10 to 17 (AHVDAGKT), 74 to 78 (DTPGH), and 128 to 131 (NKID).

Belongs to the TRAFAC class translation factor GTPase superfamily. Classic translation factor GTPase family. TetM/TetO subfamily.

Its function is as follows. Abolishes the inhibitory effect of tetracyclin on protein synthesis by a non-covalent modification of the ribosomes. The sequence is that of Tetracycline resistance protein TetM from transposon Tn5251 (tetM(5251)) from Streptococcus pneumoniae.